Reading from the N-terminus, the 95-residue chain is Defensin-like protein 247 (95 aa).

Residues 1 to 24 (MKFAAIFLVTCVFFSLFSSNLSQG) form the signal peptide. 4 cysteine pairs are disulfide-bonded: Cys37-Cys94, Cys48-Cys77, Cys56-Cys87, and Cys75-Cys89.

The protein belongs to the DEFL family.

It localises to the secreted. The protein is Defensin-like protein 247 (SCRL6) of Arabidopsis thaliana (Mouse-ear cress).